The following is a 274-amino-acid chain: Large ribosomal subunit protein uL2 (274 aa).

Disordered stretches follow at residues 28–54 and 221–274; these read KPFA…TRHI and RGTA…RSKK. Positions 39 to 49 are enriched in polar residues; it reads KTGGRNNNGRI.

This sequence belongs to the universal ribosomal protein uL2 family. Part of the 50S ribosomal subunit. Forms a bridge to the 30S subunit in the 70S ribosome.

Functionally, one of the primary rRNA binding proteins. Required for association of the 30S and 50S subunits to form the 70S ribosome, for tRNA binding and peptide bond formation. It has been suggested to have peptidyltransferase activity; this is somewhat controversial. Makes several contacts with the 16S rRNA in the 70S ribosome. The sequence is that of Large ribosomal subunit protein uL2 from Edwardsiella ictaluri (strain 93-146).